We begin with the raw amino-acid sequence, 478 residues long: Protein nucleotidyltransferase YdiU (478 aa).

The ATP site is built by Gly-84, Gly-86, Arg-87, Lys-107, Asp-119, Gly-120, Arg-170, and Arg-177. Asp-246 serves as the catalytic Proton acceptor. The Mg(2+) site is built by Asn-247 and Asp-256. Residue Asp-256 participates in ATP binding.

This sequence belongs to the SELO family. Mg(2+) is required as a cofactor. The cofactor is Mn(2+).

It carries out the reaction L-seryl-[protein] + ATP = 3-O-(5'-adenylyl)-L-seryl-[protein] + diphosphate. The enzyme catalyses L-threonyl-[protein] + ATP = 3-O-(5'-adenylyl)-L-threonyl-[protein] + diphosphate. It catalyses the reaction L-tyrosyl-[protein] + ATP = O-(5'-adenylyl)-L-tyrosyl-[protein] + diphosphate. The catalysed reaction is L-histidyl-[protein] + UTP = N(tele)-(5'-uridylyl)-L-histidyl-[protein] + diphosphate. It carries out the reaction L-seryl-[protein] + UTP = O-(5'-uridylyl)-L-seryl-[protein] + diphosphate. The enzyme catalyses L-tyrosyl-[protein] + UTP = O-(5'-uridylyl)-L-tyrosyl-[protein] + diphosphate. In terms of biological role, nucleotidyltransferase involved in the post-translational modification of proteins. It can catalyze the addition of adenosine monophosphate (AMP) or uridine monophosphate (UMP) to a protein, resulting in modifications known as AMPylation and UMPylation. The polypeptide is Protein nucleotidyltransferase YdiU (Escherichia coli O17:K52:H18 (strain UMN026 / ExPEC)).